The following is a 328-amino-acid chain: DNA-directed RNA polymerase subunit alpha (328 aa).

The interval Met-1–Ser-231 is alpha N-terminal domain (alpha-NTD). The tract at residues Asp-247 to Gly-328 is alpha C-terminal domain (alpha-CTD).

This sequence belongs to the RNA polymerase alpha chain family. In terms of assembly, homodimer. The RNAP catalytic core consists of 2 alpha, 1 beta, 1 beta' and 1 omega subunit. When a sigma factor is associated with the core the holoenzyme is formed, which can initiate transcription.

It catalyses the reaction RNA(n) + a ribonucleoside 5'-triphosphate = RNA(n+1) + diphosphate. Functionally, DNA-dependent RNA polymerase catalyzes the transcription of DNA into RNA using the four ribonucleoside triphosphates as substrates. The sequence is that of DNA-directed RNA polymerase subunit alpha from Chlorobaculum tepidum (strain ATCC 49652 / DSM 12025 / NBRC 103806 / TLS) (Chlorobium tepidum).